The sequence spans 291 residues: Small ribosomal subunit protein uS2 (291 aa).

The tract at residues 235–291 (NLQEDEESGDSGVDPYQDREEEITDYSNYTPKDEASGDDEDEEDNSLVNDEDLYDDK) is disordered. Acidic residues predominate over residues 270–291 (SGDDEDEEDNSLVNDEDLYDDK).

It belongs to the universal ribosomal protein uS2 family.

The protein is Small ribosomal subunit protein uS2 of Treponema denticola (strain ATCC 35405 / DSM 14222 / CIP 103919 / JCM 8153 / KCTC 15104).